An 89-amino-acid polypeptide reads, in one-letter code: Small ribosomal subunit protein uS15 (89 aa).

It belongs to the universal ribosomal protein uS15 family. Part of the 30S ribosomal subunit. Forms a bridge to the 50S subunit in the 70S ribosome, contacting the 23S rRNA.

Functionally, one of the primary rRNA binding proteins, it binds directly to 16S rRNA where it helps nucleate assembly of the platform of the 30S subunit by binding and bridging several RNA helices of the 16S rRNA. Forms an intersubunit bridge (bridge B4) with the 23S rRNA of the 50S subunit in the ribosome. In Streptococcus pyogenes serotype M2 (strain MGAS10270), this protein is Small ribosomal subunit protein uS15.